Reading from the N-terminus, the 187-residue chain is Large ribosomal subunit protein uL5 (187 aa).

The protein belongs to the universal ribosomal protein uL5 family. In terms of assembly, part of the 50S ribosomal subunit; part of the 5S rRNA/L5/L18/L25 subcomplex. Contacts the 5S rRNA and the P site tRNA. Forms a bridge to the 30S subunit in the 70S ribosome.

Functionally, this is one of the proteins that bind and probably mediate the attachment of the 5S RNA into the large ribosomal subunit, where it forms part of the central protuberance. In the 70S ribosome it contacts protein S13 of the 30S subunit (bridge B1b), connecting the 2 subunits; this bridge is implicated in subunit movement. Contacts the P site tRNA; the 5S rRNA and some of its associated proteins might help stabilize positioning of ribosome-bound tRNAs. The polypeptide is Large ribosomal subunit protein uL5 (Nocardia farcinica (strain IFM 10152)).